The sequence spans 157 residues: Ubiquitin-like protein 4A (157 aa).

The 76-residue stretch at 1–76 (MQLTVKALQG…LNLVVKPLEK (76 aa)) folds into the Ubiquitin-like domain. A Glycyl lysine isopeptide (Lys-Gly) (interchain with G-Cter in ubiquitin) cross-link involves residue lysine 48. Residue serine 90 is modified to Phosphoserine. Residues 96-138 (WQLISKVLARHFSVADASRVLEQLQRDYDRSLSRLTLDDIERL) are required and sufficient for interaction with BAG6.

As to quaternary structure, component of the BAG6/BAT3 complex, at least composed of BAG6, UBL4A and GET4/TRC35. Interacts with BAG6; the interaction is direct and required for UBL4A protein stability. Interacts with USP13; may be indirect via BAG6. In terms of processing, polyubiquitinated. Ubiquitination by AMFR and deubiquitination by USP13 may regulate the interaction between the BAG6/BAT3 complex and SGTA and therefore may regulate client proteins fate.

It is found in the cytoplasm. The protein resides in the cytosol. It localises to the nucleus. As part of a cytosolic protein quality control complex, the BAG6/BAT3 complex, maintains misfolded and hydrophobic patches-containing proteins in a soluble state and participates in their proper delivery to the endoplasmic reticulum or alternatively can promote their sorting to the proteasome where they undergo degradation. The BAG6/BAT3 complex is involved in the post-translational delivery of tail-anchored/type II transmembrane proteins to the endoplasmic reticulum membrane. Recruited to ribosomes, it interacts with the transmembrane region of newly synthesized tail-anchored proteins and together with SGTA and ASNA1 mediates their delivery to the endoplasmic reticulum. Client proteins that cannot be properly delivered to the endoplasmic reticulum are ubiquitinated and sorted to the proteasome. Similarly, the BAG6/BAT3 complex also functions as a sorting platform for proteins of the secretory pathway that are mislocalized to the cytosol either delivering them to the proteasome for degradation or to the endoplasmic reticulum. The BAG6/BAT3 complex also plays a role in the endoplasmic reticulum-associated degradation (ERAD), a quality control mechanism that eliminates unwanted proteins of the endoplasmic reticulum through their retrotranslocation to the cytosol and their targeting to the proteasome. It maintains these retrotranslocated proteins in an unfolded yet soluble state condition in the cytosol to ensure their proper delivery to the proteasome. In Mus musculus (Mouse), this protein is Ubiquitin-like protein 4A.